Reading from the N-terminus, the 363-residue chain is Biotin synthase (363 aa).

3 positions are modified to phosphoserine: Ser13, Ser14, and Ser17. The Radical SAM core domain maps to 54–276 (KKVQQCTLLS…IATARICMPK (223 aa)). [4Fe-4S] cluster is bound by residues Cys69, Cys73, and Cys76. [2Fe-2S] cluster contacts are provided by Cys113, Cys146, Cys206, and Arg280. The tract at residues 337-363 (EYGTSTEGEDGTFTLPPKERLAPSPSL) is disordered.

It belongs to the radical SAM superfamily. Biotin synthase family. Requires [4Fe-4S] cluster as cofactor. The cofactor is [2Fe-2S] cluster.

It carries out the reaction (4R,5S)-dethiobiotin + (sulfur carrier)-SH + 2 reduced [2Fe-2S]-[ferredoxin] + 2 S-adenosyl-L-methionine = (sulfur carrier)-H + biotin + 2 5'-deoxyadenosine + 2 L-methionine + 2 oxidized [2Fe-2S]-[ferredoxin]. It functions in the pathway cofactor biosynthesis; biotin biosynthesis; biotin from 7,8-diaminononanoate: step 2/2. Its function is as follows. Catalyzes the last step of biotin biosynthesis, the conversion of dethiobiotin to biotin. In Schizosaccharomyces pombe (strain 972 / ATCC 24843) (Fission yeast), this protein is Biotin synthase (bio2).